Reading from the N-terminus, the 156-residue chain is 6,7-dimethyl-8-ribityllumazine synthase (156 aa).

5-amino-6-(D-ribitylamino)uracil is bound by residues Phe-23, 57 to 59, and 81 to 83; these read AYE and AII. Position 86–87 (86–87) interacts with (2S)-2-hydroxy-3-oxobutyl phosphate; that stretch reads GT. His-89 (proton donor) is an active-site residue. Phe-114 is a 5-amino-6-(D-ribitylamino)uracil binding site. Arg-128 contributes to the (2S)-2-hydroxy-3-oxobutyl phosphate binding site.

Belongs to the DMRL synthase family.

The enzyme catalyses (2S)-2-hydroxy-3-oxobutyl phosphate + 5-amino-6-(D-ribitylamino)uracil = 6,7-dimethyl-8-(1-D-ribityl)lumazine + phosphate + 2 H2O + H(+). Its pathway is cofactor biosynthesis; riboflavin biosynthesis; riboflavin from 2-hydroxy-3-oxobutyl phosphate and 5-amino-6-(D-ribitylamino)uracil: step 1/2. Catalyzes the formation of 6,7-dimethyl-8-ribityllumazine by condensation of 5-amino-6-(D-ribitylamino)uracil with 3,4-dihydroxy-2-butanone 4-phosphate. This is the penultimate step in the biosynthesis of riboflavin. This is 6,7-dimethyl-8-ribityllumazine synthase from Helicobacter pylori (strain P12).